A 119-amino-acid chain; its full sequence is Beta-2-microglobulin (119 aa).

Positions 1–20 (MARSVVVALLVLLSLSGLEA) are cleaved as a signal peptide. Residues 25–114 (PKIQVYSRHP…VTFPTPKTVK (90 aa)) enclose the Ig-like C1-type domain. The cysteines at positions 45 and 100 are disulfide-linked.

It belongs to the beta-2-microglobulin family. In terms of assembly, heterodimer of an alpha chain and a beta chain. Beta-2-microglobulin is the beta-chain of major histocompatibility complex class I molecules.

The protein localises to the secreted. In terms of biological role, component of the class I major histocompatibility complex (MHC). Involved in the presentation of peptide antigens to the immune system. The protein is Beta-2-microglobulin (B2M) of Lagothrix lagotricha (Brown woolly monkey).